The sequence spans 182 residues: Orotate phosphoribosyltransferase (182 aa).

Residues Arg-96, Lys-97, Lys-100, His-102, and 122-130 (EDTSTTGGS) contribute to the 5-phospho-alpha-D-ribose 1-diphosphate site. Positions 126 and 154 each coordinate orotate.

The protein belongs to the purine/pyrimidine phosphoribosyltransferase family. PyrE subfamily. As to quaternary structure, homodimer. The cofactor is Mg(2+).

It catalyses the reaction orotidine 5'-phosphate + diphosphate = orotate + 5-phospho-alpha-D-ribose 1-diphosphate. The protein operates within pyrimidine metabolism; UMP biosynthesis via de novo pathway; UMP from orotate: step 1/2. Its function is as follows. Catalyzes the transfer of a ribosyl phosphate group from 5-phosphoribose 1-diphosphate to orotate, leading to the formation of orotidine monophosphate (OMP). The chain is Orotate phosphoribosyltransferase from Streptomyces coelicolor (strain ATCC BAA-471 / A3(2) / M145).